The sequence spans 142 residues: Large ribosomal subunit protein uL11 (142 aa).

A disordered region spans residues 84-103; the sequence is AGVKSGSGRPNSDKVGTVTD.

It belongs to the universal ribosomal protein uL11 family. Part of the ribosomal stalk of the 50S ribosomal subunit. Interacts with L10 and the large rRNA to form the base of the stalk. L10 forms an elongated spine to which L12 dimers bind in a sequential fashion forming a multimeric L10(L12)X complex. Post-translationally, one or more lysine residues are methylated.

In terms of biological role, forms part of the ribosomal stalk which helps the ribosome interact with GTP-bound translation factors. This is Large ribosomal subunit protein uL11 from Aliivibrio salmonicida (strain LFI1238) (Vibrio salmonicida (strain LFI1238)).